A 149-amino-acid polypeptide reads, in one-letter code: Gonadotropin subunit beta-2 (149 aa).

Positions 1 to 24 are cleaved as a signal peptide; it reads MARIPECTILLLLCMCVLAVPAQC. 6 disulfides stabilise this stretch: Cys-30/Cys-78, Cys-44/Cys-93, Cys-47/Cys-131, Cys-55/Cys-109, Cys-59/Cys-111, and Cys-114/Cys-121. Residue Asn-34 is glycosylated (N-linked (GlcNAc...) asparagine).

Belongs to the glycoprotein hormones subunit beta family. As to quaternary structure, heterodimer of an alpha and a beta chain.

Its subcellular location is the secreted. In terms of biological role, involved in gametogenesis and steroidogenesis. The protein is Gonadotropin subunit beta-2 (cgbb) of Clupea pallasii (Pacific herring).